The following is a 494-amino-acid chain: BUB3-interacting and GLEBS motif-containing protein ZNF207 (494 aa).

The segment at 1–92 (MGRKKKKQLK…EGIPEKDMDE (92 aa)) is microtubule-binding region. 2 consecutive C2H2-type zinc fingers follow at residues 11–34 (PWCW…KAKH) and 35–58 (FKCH…MQVH). Positions 100–111 (KTQESQKKKQQD) are enriched in basic and acidic residues. Disordered stretches follow at residues 100-161 (KTQE…PGIP), 250-377 (NRPP…SATS), and 455-494 (LPGA…GGRY). Over residues 112–121 (DSDEYDDDDS) the composition is skewed to acidic residues. The span at 127-136 (FQPQPVQPQQ) shows a compositional bias: polar residues. Pro residues predominate over residues 142-161 (MAQPGLPPVPGAPGMPPGIP). The segment covering 283-300 (SSSTASSNSESLSASSKA) has biased composition (low complexity). Polar residues predominate over residues 323–332 (LNSTPATSTE). Positions 342-377 (TQSTASTTSTTNSTAAKPAASITSKPATLTTTSATS) are enriched in low complexity. Residues 375-407 (ATSKLIHPDEDISLEERRAQLPKYQRNLPRPGQ) are GLEBS. Residues 463-483 (GQGPPMVPPYQGGPPRPPMGM) are compositionally biased toward pro residues.

As to quaternary structure, interacts (via GLEBS region) with BUB3.

It is found in the nucleus. It localises to the chromosome. The protein localises to the centromere. The protein resides in the kinetochore. Its subcellular location is the cytoplasm. It is found in the cytoskeleton. It localises to the spindle. Functionally, kinetochore- and microtubule-binding protein that plays a key role in spindle assembly. ZNF207/BuGZ is mainly composed of disordered low-complexity regions and undergoes phase transition or coacervation to form temperature-dependent liquid droplets. Coacervation promotes microtubule bundling and concentrates tubulin, promoting microtubule polymerization and assembly of spindle and spindle matrix by concentrating its building blocks. Also acts as a regulator of mitotic chromosome alignment by mediating the stability and kinetochore loading of BUB3. Mechanisms by which BUB3 is protected are unclear: according to a first report, ZNF207/BuGZ may act by blocking ubiquitination and proteasomal degradation of BUB3. According to another report, the stabilization is independent of the proteasome. This is BUB3-interacting and GLEBS motif-containing protein ZNF207 from Pongo abelii (Sumatran orangutan).